The chain runs to 24 residues: Brevinin-1Lb (24 aa).

Cysteines 18 and 24 form a disulfide.

As to expression, expressed by the skin glands.

It is found in the secreted. Functionally, antibacterial activity against Gram-positive bacterium S.aureus and Gram-negative bacterium E.coli. The sequence is that of Brevinin-1Lb from Rana luteiventris (Columbia spotted frog).